The following is a 269-amino-acid chain: F-box protein At5g52880 (269 aa).

The 47-residue stretch at 109–155 (DIDIPSLPQDILIHIFSFLEISSLVSSAQVSRSWNQATHENSLWQSQ) folds into the F-box domain.

This chain is F-box protein At5g52880, found in Arabidopsis thaliana (Mouse-ear cress).